Consider the following 299-residue polypeptide: Putative fructokinase (299 aa).

Residue T130 participates in ATP binding. Zn(2+)-binding residues include H153, C168, H171, and C174. ATP is bound by residues P182 and 230–234; that span reads GVMQQ.

Belongs to the ROK (NagC/XylR) family. Mg(2+) is required as a cofactor.

It catalyses the reaction D-fructose + ATP = D-fructose 6-phosphate + ADP + H(+). With respect to regulation, inhibited by zinc ions. Functionally, seems to be involved in the degradation of glucomannan. The protein is Putative fructokinase (gmuE) of Bacillus subtilis (strain 168).